The primary structure comprises 1072 residues: Guanylyl cyclase C (1072 aa).

Residues 1–22 (MTSLLGLAVRLLLFQPTLMFWA) form the signal peptide. The Extracellular portion of the chain corresponds to 23–429 (SQVRQKCHNG…PNDVPGLGPQ (407 aa)). 7 N-linked (GlcNAc...) asparagine glycosylation sites follow: Asn31, Asn74, Asn78, Asn187, Asn194, Asn306, and Asn401. The helical transmembrane segment at 430-453 (ILMIAVFTLTGIVVVLLLIALLVL) threads the bilayer. Residues 454 to 1072 (RKYRRDHELR…NNSDHDSTYF (619 aa)) lie on the Cytoplasmic side of the membrane. The Protein kinase domain maps to 488–748 (LKIDDDRRRD…KIESTLAKIF (261 aa)). Residues 823-953 (TIYFSDIVGF…DTVNTASRME (131 aa)) form the Guanylate cyclase domain.

This sequence belongs to the adenylyl cyclase class-4/guanylyl cyclase family. Homotrimer. Interacts via its C-terminal region with PDZK2. Interacts with the lectin chaperone VIP36. Post-translationally, glycosylation at Asn-74 and/or Asn-78 is required for interaction with VIP36 while glycosylation at Asn-401 modulates ligand-mediated GC-C activation.

The protein resides in the cell membrane. The protein localises to the endoplasmic reticulum membrane. It catalyses the reaction GTP = 3',5'-cyclic GMP + diphosphate. Its function is as follows. Guanylyl cyclase that catalyzes synthesis of cyclic GMP (cGMP) from GTP. Receptor for the E.coli heat-stable enterotoxin; E.coli enterotoxin markedly stimulates the accumulation of cGMP in mammalian cells expressing GUCY2C. In Rattus norvegicus (Rat), this protein is Guanylyl cyclase C (Gucy2c).